Consider the following 427-residue polypeptide: 3-phosphoshikimate 1-carboxyvinyltransferase (427 aa).

Residues Lys20, Ser21, and Arg25 each contribute to the 3-phosphoshikimate site. Lys20 provides a ligand contact to phosphoenolpyruvate. Phosphoenolpyruvate contacts are provided by Gly92 and Arg120. Residues Ser166, Gln168, Asp312, and Lys339 each coordinate 3-phosphoshikimate. Gln168 contacts phosphoenolpyruvate. Residue Asp312 is the Proton acceptor of the active site. Residues Arg343 and Arg385 each coordinate phosphoenolpyruvate.

This sequence belongs to the EPSP synthase family. Monomer.

It localises to the cytoplasm. The enzyme catalyses 3-phosphoshikimate + phosphoenolpyruvate = 5-O-(1-carboxyvinyl)-3-phosphoshikimate + phosphate. It participates in metabolic intermediate biosynthesis; chorismate biosynthesis; chorismate from D-erythrose 4-phosphate and phosphoenolpyruvate: step 6/7. Catalyzes the transfer of the enolpyruvyl moiety of phosphoenolpyruvate (PEP) to the 5-hydroxyl of shikimate-3-phosphate (S3P) to produce enolpyruvyl shikimate-3-phosphate and inorganic phosphate. The protein is 3-phosphoshikimate 1-carboxyvinyltransferase of Streptococcus pneumoniae (strain 70585).